Consider the following 57-residue polypeptide: Large ribosomal subunit protein bL32 (57 aa).

The segment covering 1–19 (MATPKRRMSRANTRSRRSQ) has biased composition (basic residues). The disordered stretch occupies residues 1 to 20 (MATPKRRMSRANTRSRRSQW).

This sequence belongs to the bacterial ribosomal protein bL32 family.

The protein is Large ribosomal subunit protein bL32 of Mycobacterium marinum (strain ATCC BAA-535 / M).